Here is a 485-residue protein sequence, read N- to C-terminus: NADH-quinone oxidoreductase subunit N (485 aa).

Transmembrane regions (helical) follow at residues leucine 8–isoleucine 28, phenylalanine 35–valine 55, glycine 71–alanine 91, phenylalanine 105–leucine 125, serine 127–phenylalanine 147, tyrosine 159–alanine 179, leucine 203–phenylalanine 223, proline 235–methionine 255, valine 271–glutamine 291, leucine 297–glutamine 317, valine 326–leucine 346, alanine 373–isoleucine 393, tryptophan 408–valine 430, and isoleucine 455–isoleucine 475.

This sequence belongs to the complex I subunit 2 family. In terms of assembly, NDH-1 is composed of 13 different subunits. Subunits NuoA, H, J, K, L, M, N constitute the membrane sector of the complex.

It localises to the cell inner membrane. It catalyses the reaction a quinone + NADH + 5 H(+)(in) = a quinol + NAD(+) + 4 H(+)(out). In terms of biological role, NDH-1 shuttles electrons from NADH, via FMN and iron-sulfur (Fe-S) centers, to quinones in the respiratory chain. The immediate electron acceptor for the enzyme in this species is believed to be ubiquinone. Couples the redox reaction to proton translocation (for every two electrons transferred, four hydrogen ions are translocated across the cytoplasmic membrane), and thus conserves the redox energy in a proton gradient. This is NADH-quinone oxidoreductase subunit N from Shigella sonnei (strain Ss046).